The primary structure comprises 404 residues: Aspartokinase 1 (404 aa).

7-10 (KFGG) is a binding site for ATP. 25 to 30 (HIKEAI) contributes to the substrate binding site. An ATP-binding site is contributed by serine 41. Residues 52–54 (TDS), glutamate 79, 130–131 (LA), 155–158 (RGGS), and serine 158 contribute to the substrate site. ATP-binding positions include 178 to 179 (TD) and 184 to 189 (MTADPR). Substrate-binding positions include 299-301 (SVD), 355-356 (VT), 369-370 (PI), and 376-377 (SH). Residues 344–404 (AVGAGIMGVP…ALHEVFELSK (61 aa)) form the ACT domain.

The protein belongs to the aspartokinase family. In terms of assembly, tetramer consisting of 2 isoforms Alpha (catalytic) and 2 isoforms Beta (function not known).

It carries out the reaction L-aspartate + ATP = 4-phospho-L-aspartate + ADP. Its pathway is amino-acid biosynthesis; L-lysine biosynthesis via DAP pathway; (S)-tetrahydrodipicolinate from L-aspartate: step 1/4. It functions in the pathway amino-acid biosynthesis; L-methionine biosynthesis via de novo pathway; L-homoserine from L-aspartate: step 1/3. It participates in amino-acid biosynthesis; L-threonine biosynthesis; L-threonine from L-aspartate: step 1/5. Diaminopimelate-sensitive. In terms of biological role, catalyzes the phosphorylation of the beta-carboxyl group of aspartic acid with ATP to yield 4-phospho-L-aspartate, which is involved in the branched biosynthetic pathway leading to the biosynthesis of amino acids threonine, isoleucine and methionine. The polypeptide is Aspartokinase 1 (dapG) (Bacillus subtilis (strain 168)).